Consider the following 207-residue polypeptide: LexA repressor (207 aa).

The segment at residues 28–48 (VREIGEAVGLASSSTVHGHLA) is a DNA-binding region (H-T-H motif). Catalysis depends on for autocatalytic cleavage activity residues Ser129 and Lys167.

It belongs to the peptidase S24 family. As to quaternary structure, homodimer.

It carries out the reaction Hydrolysis of Ala-|-Gly bond in repressor LexA.. Represses a number of genes involved in the response to DNA damage (SOS response), including recA and lexA. In the presence of single-stranded DNA, RecA interacts with LexA causing an autocatalytic cleavage which disrupts the DNA-binding part of LexA, leading to derepression of the SOS regulon and eventually DNA repair. This chain is LexA repressor, found in Bacillus licheniformis (strain ATCC 14580 / DSM 13 / JCM 2505 / CCUG 7422 / NBRC 12200 / NCIMB 9375 / NCTC 10341 / NRRL NRS-1264 / Gibson 46).